Here is a 452-residue protein sequence, read N- to C-terminus: 5'-nucleotidase domain-containing protein 1 (452 aa).

Residue D16 is the Nucleophile of the active site. D16 and D18 together coordinate Mg(2+). Residue D18 is the Proton donor of the active site. Residue K171 is modified to N6-acetyllysine. Mg(2+) is bound at residue D313. The span at 339-361 (GDKDGKPEESEPEEKKGKYEGSK) shows a compositional bias: basic and acidic residues. The segment at 339–365 (GDKDGKPEESEPEEKKGKYEGSKAKPL) is disordered.

This sequence belongs to the 5'(3')-deoxyribonucleotidase family.

This is 5'-nucleotidase domain-containing protein 1 (NT5DC1) from Bos taurus (Bovine).